The chain runs to 529 residues: GMP synthase [glutamine-hydrolyzing] (529 aa).

Residues 3–204 (TVAIVDFGSQ…FLKIAGCTRD (202 aa)) enclose the Glutamine amidotransferase type-1 domain. Cys87 functions as the Nucleophile in the catalytic mechanism. Active-site residues include His179 and Glu181. The GMPS ATP-PPase domain maps to 205–395 (WTMGSFLHTQ…LGLPSAILDR (191 aa)). 232–238 (SGGVDSS) is an ATP binding site.

As to quaternary structure, homodimer.

The catalysed reaction is XMP + L-glutamine + ATP + H2O = GMP + L-glutamate + AMP + diphosphate + 2 H(+). It functions in the pathway purine metabolism; GMP biosynthesis; GMP from XMP (L-Gln route): step 1/1. In terms of biological role, catalyzes the synthesis of GMP from XMP. The polypeptide is GMP synthase [glutamine-hydrolyzing] (Anaplasma marginale (strain St. Maries)).